We begin with the raw amino-acid sequence, 288 residues long: Beta-lactamase PSE-4 (288 aa).

The N-terminal stretch at 1 to 17 (MKFLLAFSLLIPSVVFA) is a signal peptide. The active-site Acyl-ester intermediate is S65. Residues C72 and C118 are joined by a disulfide bond. 229 to 231 (RSG) provides a ligand contact to substrate.

Belongs to the class-A beta-lactamase family.

The catalysed reaction is a beta-lactam + H2O = a substituted beta-amino acid. Functionally, hydrolyzes both carbenicillin and oxacillin. This is Beta-lactamase PSE-4 (pse4) from Pseudomonas aeruginosa.